Reading from the N-terminus, the 329-residue chain is D-alanine--D-alanine ligase (329 aa).

Residues 120-326 (KLWYDAIGIP…FHEFLADCIN (207 aa)) enclose the ATP-grasp domain. An ATP-binding site is contributed by 150–205 (AFDKWGKVFVKAARQGSSVGCYSVTNKQSVSQAVNDAFGYSEQVLVEKSVKPRELE). Positions 280, 293, and 295 each coordinate Mg(2+).

It belongs to the D-alanine--D-alanine ligase family. The cofactor is Mg(2+). Mn(2+) serves as cofactor.

It localises to the cytoplasm. The enzyme catalyses 2 D-alanine + ATP = D-alanyl-D-alanine + ADP + phosphate + H(+). Its pathway is cell wall biogenesis; peptidoglycan biosynthesis. Its function is as follows. Cell wall formation. This Vibrio campbellii (strain ATCC BAA-1116) protein is D-alanine--D-alanine ligase.